Reading from the N-terminus, the 224-residue chain is Phosphoribosylformylglycinamidine synthase subunit PurQ (224 aa).

Residues 4–224 (RIGVVTFPGT…YSALDAVLTG (221 aa)) form the Glutamine amidotransferase type-1 domain. The active-site Nucleophile is the C87. Active-site residues include H195 and E197.

In terms of assembly, part of the FGAM synthase complex composed of 1 PurL, 1 PurQ and 2 PurS subunits.

The protein resides in the cytoplasm. The enzyme catalyses N(2)-formyl-N(1)-(5-phospho-beta-D-ribosyl)glycinamide + L-glutamine + ATP + H2O = 2-formamido-N(1)-(5-O-phospho-beta-D-ribosyl)acetamidine + L-glutamate + ADP + phosphate + H(+). It catalyses the reaction L-glutamine + H2O = L-glutamate + NH4(+). The protein operates within purine metabolism; IMP biosynthesis via de novo pathway; 5-amino-1-(5-phospho-D-ribosyl)imidazole from N(2)-formyl-N(1)-(5-phospho-D-ribosyl)glycinamide: step 1/2. Functionally, part of the phosphoribosylformylglycinamidine synthase complex involved in the purines biosynthetic pathway. Catalyzes the ATP-dependent conversion of formylglycinamide ribonucleotide (FGAR) and glutamine to yield formylglycinamidine ribonucleotide (FGAM) and glutamate. The FGAM synthase complex is composed of three subunits. PurQ produces an ammonia molecule by converting glutamine to glutamate. PurL transfers the ammonia molecule to FGAR to form FGAM in an ATP-dependent manner. PurS interacts with PurQ and PurL and is thought to assist in the transfer of the ammonia molecule from PurQ to PurL. The polypeptide is Phosphoribosylformylglycinamidine synthase subunit PurQ (Mycobacterium bovis (strain ATCC BAA-935 / AF2122/97)).